The chain runs to 130 residues: Small ribosomal subunit protein uS8 (130 aa).

It belongs to the universal ribosomal protein uS8 family. Part of the 30S ribosomal subunit. Contacts proteins S5 and S12.

In terms of biological role, one of the primary rRNA binding proteins, it binds directly to 16S rRNA central domain where it helps coordinate assembly of the platform of the 30S subunit. The protein is Small ribosomal subunit protein uS8 of Psychromonas ingrahamii (strain DSM 17664 / CCUG 51855 / 37).